The following is a 454-amino-acid chain: MYCRRSQLKKPSMSHRTHYYWIAHQGTPLHGVLSIPGDKSISHRAVMFAALADGTSRIDGFLEAEDTRSTAAILARLGVRIETPSFTQRIVHGVGVDGLQASDIALDCGNAGTGMRLLAGLLVAQPFDSVLVGDASLSKRPMRRVTDPLSQMGARIDTSDDGTPPLRIYGGQLLRGIDFISPVASAQIKSAVLLAGLYARNETVVREPHPTRDYTERMLTAFGVDIDVSTGCVRLRGGQRLCATNITIPADFSSAAFYLVAASVIPGSDITLRAVGLNPRRIGLLTVLRLMGADIVESNRHEQGGEPVADLRVRYASLQGTRVPEDLVPDMIDEFPALFVAAAAAEGQTVVSGAAELRVKESDRLAAMVTGLRVLGVQVDETADGATIHGGPIGHGTINSHGDHRIAMAFSIAGQLSVSTVRIEDVANVATSFPDYETLARSAGFGLEVYCDPA.

Residues K39, S40, and R44 each contribute to the 3-phosphoshikimate site. K39 provides a ligand contact to phosphoenolpyruvate. Residues G112 and R140 each coordinate phosphoenolpyruvate. 3-phosphoshikimate-binding residues include S185, Q187, D333, and K360. Q187 lines the phosphoenolpyruvate pocket. The active-site Proton acceptor is the D333. Residues R364 and R405 each contribute to the phosphoenolpyruvate site.

It belongs to the EPSP synthase family. Monomer.

Its subcellular location is the cytoplasm. The enzyme catalyses 3-phosphoshikimate + phosphoenolpyruvate = 5-O-(1-carboxyvinyl)-3-phosphoshikimate + phosphate. The protein operates within metabolic intermediate biosynthesis; chorismate biosynthesis; chorismate from D-erythrose 4-phosphate and phosphoenolpyruvate: step 6/7. Functionally, catalyzes the transfer of the enolpyruvyl moiety of phosphoenolpyruvate (PEP) to the 5-hydroxyl of shikimate-3-phosphate (S3P) to produce enolpyruvyl shikimate-3-phosphate and inorganic phosphate. In Xylella fastidiosa (strain Temecula1 / ATCC 700964), this protein is 3-phosphoshikimate 1-carboxyvinyltransferase.